Consider the following 2327-residue polypeptide: Nonribosomal peptide synthetase apmB (2327 aa).

An adenylation 1 region spans residues 214-605 (DTQAKSRPDS…GRKDMQIKLR (392 aa)). The Carrier 1 domain maps to 734–810 (EPATATGKVL…EMADACTKVI (77 aa)). Ser771 carries the O-(pantetheine 4'-phosphoryl)serine modification. The condensation 1 stretch occupies residues 845 to 1259 (EDLYPCTAMQ…IFISSKDQES (415 aa)). The tract at residues 1281-1675 (ERIAERPDHE…RRKDTQVKLR (395 aa)) is adenylation 2. Residues 1816 to 1892 (PPTTDMQITM…AISAVAETLS (77 aa)) enclose the Carrier 2 domain. Position 1853 is an O-(pantetheine 4'-phosphoryl)serine (Ser1853). The condensation 2 stretch occupies residues 1937-2260 (TDFQSLAING…VFQYQDFGGE (324 aa)). The tract at residues 2299–2327 (RVDLPRRPSPAGDTRDGPTAASDSPSRAR) is disordered.

Belongs to the NRP synthetase family.

The catalysed reaction is N-benzoyl-L-phenylalaninol + benzoate + L-phenylalanine + 2 ATP = asperphenamate + 2 AMP + 2 diphosphate + H(+). It participates in secondary metabolite biosynthesis. Functionally, nonribosomal peptide synthetase; part of the gene cluster that mediates the biosynthesis of asperphenamate, a rare linear amino acid ester that exhibits antitumor activity towards a number of cell lines. The structure of asperphenamate contains two subunits, N-benzoylphenylalanine and N-benzoylphenylalaninol, which are connected by an inter-molecular ester bond. The first step of asperphenamate biosynthesis is the generation of N-benzoylphenylalaninol by the nonribosomal peptide synthase apmA. Using phenylalanine and benzoic acid as substrates, apmA catalyzes amide bond formation and tethers the intermediate into the NRPS chain. Then, the terminal R domain of apmA catalyzes the reduction reaction to get the shunt product N-benzoylphenylalaninol. Subsequently, the nonribosomal peptide synthase apmB activates the same substrates as does apmA (phenylalanine and benzoic acid) to produce N-benzoylphenylalanine before condensing N-benzoylphenylalanine and N-benzoylphenylalaninol to release asperphenamate. This chain is Nonribosomal peptide synthetase apmB, found in Penicillium brevicompactum.